We begin with the raw amino-acid sequence, 110 residues long: Large ribosomal subunit protein uL22 (110 aa).

The protein belongs to the universal ribosomal protein uL22 family. In terms of assembly, part of the 50S ribosomal subunit.

In terms of biological role, this protein binds specifically to 23S rRNA; its binding is stimulated by other ribosomal proteins, e.g. L4, L17, and L20. It is important during the early stages of 50S assembly. It makes multiple contacts with different domains of the 23S rRNA in the assembled 50S subunit and ribosome. Functionally, the globular domain of the protein is located near the polypeptide exit tunnel on the outside of the subunit, while an extended beta-hairpin is found that lines the wall of the exit tunnel in the center of the 70S ribosome. The polypeptide is Large ribosomal subunit protein uL22 (Shewanella denitrificans (strain OS217 / ATCC BAA-1090 / DSM 15013)).